Here is a 153-residue protein sequence, read N- to C-terminus: MAVESRVTQEEIKKEPEKPIDREKTCPLLLRVFTTNNGRHHRMDEFSRGNVPSSELQIYTWMDATLKELTSLVKEVYPEARKKGTHFNFAIVFMDLKRPGYRVKEIGSTMSGRKGTDDSMTLQSQKFQIGDYLDIAITPPNRAPPSSGRMRPY.

Residues 1-20 are disordered; sequence MAVESRVTQEEIKKEPEKPI. A2 is modified (N-acetylalanine). Over residues 7–20 the composition is skewed to basic and acidic residues; it reads VTQEEIKKEPEKPI. K13 is covalently cross-linked (Glycyl lysine isopeptide (Lys-Gly) (interchain with G-Cter in SUMO2)). Residues 93-153 form an involved in splicing regulation activity region; the sequence is FMDLKRPGYR…PPSSGRMRPY (61 aa).

The protein belongs to the SAP18 family. As to quaternary structure, found in a mRNA splicing-dependent exon junction complex (EJC). Component of the heterotrimeric ASAP (apoptosis- and splicing-associated protein) and PSAP complexes consisting of RNPS1, SAP18 and either ACIN1 or PNN, respectively; the ASAP and PSAP complexes probably are formed mutually exclusive. For the ASAP complex, the association of SAP18 seems to require a preformed RNPS1:ACIN1 complex. Forms a complex with SIN3A and HDAC1. Interacts with SUFU. As to expression, expressed in all tissues tested; highest levels in the brain, kidney and muscle; lowest levels in lung spleen, liver, intestine and testis, and moderate levels in salivary gland and heart.

It is found in the nucleus. The protein localises to the cytoplasm. Its subcellular location is the nucleus speckle. Component of the SIN3-repressing complex. Enhances the ability of SIN3-HDAC1-mediated transcriptional repression. When tethered to the promoter, it can direct the formation of a repressive complex to core histone proteins. Auxiliary component of the splicing-dependent multiprotein exon junction complex (EJC) deposited at splice junction on mRNAs. The EJC is a dynamic structure consisting of core proteins and several peripheral nuclear and cytoplasmic associated factors that join the complex only transiently either during EJC assembly or during subsequent mRNA metabolism. Component of the ASAP and PSAP complexes which bind RNA in a sequence-independent manner and are proposed to be recruited to the EJC prior to or during the splicing process and to regulate specific excision of introns in specific transcription subsets. The ASAP complex can inhibit mRNA processing during in vitro splicing reactions. The ASAP complex promotes apoptosis and is disassembled after induction of apoptosis. Involved in the splicing modulation of BCL2L1/Bcl-X (and probably other apoptotic genes); specifically inhibits the formation of proapoptotic isoforms such as Bcl-X(S); the activity is different from the established EJC assembly and function. The sequence is that of Histone deacetylase complex subunit SAP18 (Sap18) from Mus musculus (Mouse).